Consider the following 669-residue polypeptide: MAQRFYLLLLLLIFLVNLICFSSQQDLSFVFNGFNQDQAGDELLLDGFARIQSPERVLQLTDGTTQQKGHAFFNRPFDFGSASSQSLSFFTQFVCALVPKPGFYGGHGIAFVLSSAHNLKKAYASSYLGLFNRSTNGSPSSHVLAVELDTVQSAETDDMDNNHVGIDENRIQSVVSASASYYSDREGKNISLILLSGDPIQVWVDYEDTLLNVTLAPLRNQKPSKPLLSRTINLTAIFPDRKAFVGFSAATGSSISNQYILGWSFSRSRRLLKSLDISELSTVPLFTEQKRKRSPLLIVLLVILTLVVIGGLGGYYLYRRKKYAEVREPWEKEYGPLRYSYESLYKATKGFNKDGRLGKGGFGEVYKGSLPLVGDIAVKRLSHNAEQGMKQFVAEVVTMGSLQHKNLVPLLGYCRRKGELLLVSKYMEGGSVDQYLFNGDKPPLSWSQRLAILRDIASALCYLHTGASQVVLHRDIKASNVMFDDHGANLSATAAVGTIGYMALELISTGTSTKTDVYAFGAFMLEVTCGRRPFDPEMPVEKRHLVKWVCECWRKHSLVDAIDTRLRDKFTLGEVEMVLKLGLLCTSIIPESRPNMEKVMQYINRDQALPDFSPDTPGIGVSTPMVMGIPGLAITSTSVTSSASVPLVSPPSTNNSMFISHTILNGDGR.

Residues 1 to 24 form the signal peptide; it reads MAQRFYLLLLLLIFLVNLICFSSQ. Residues 25–295 lie on the Extracellular side of the membrane; it reads QDLSFVFNGF…FTEQKRKRSP (271 aa). Positions 26-266 are legume-lectin like; that stretch reads DLSFVFNGFN…NQYILGWSFS (241 aa). Residues asparagine 132, asparagine 189, asparagine 212, and asparagine 233 are each glycosylated (N-linked (GlcNAc...) asparagine). A helical membrane pass occupies residues 296 to 316; it reads LLIVLLVILTLVVIGGLGGYY. At 317–669 the chain is on the cytoplasmic side; that stretch reads LYRRKKYAEV…SHTILNGDGR (353 aa). Residues 351-609 form the Protein kinase domain; it reads FNKDGRLGKG…MQYINRDQAL (259 aa). ATP contacts are provided by residues 357-365 and lysine 379; that span reads LGKGGFGEV. The active-site Proton acceptor is aspartate 475.

In the C-terminal section; belongs to the protein kinase superfamily. Ser/Thr protein kinase family. It in the N-terminal section; belongs to the leguminous lectin family.

It is found in the cell membrane. The enzyme catalyses L-seryl-[protein] + ATP = O-phospho-L-seryl-[protein] + ADP + H(+). It catalyses the reaction L-threonyl-[protein] + ATP = O-phospho-L-threonyl-[protein] + ADP + H(+). Involved in resistance response to the pathogenic fungus Alternaria brassicicola. This chain is Probable L-type lectin-domain containing receptor kinase I.2, found in Arabidopsis thaliana (Mouse-ear cress).